The primary structure comprises 419 residues: MNLTELKQKPITDLLQLAEEMGIENMARSRKQDVIFSLLKKHAKSGEEISGDGVLEILQDGFGFLRSADASYLAGPDDIYVSPSQIRRFNLRTGDTIVGKIRPPKEGERYFALLKVDTINFDRPENAKNKILFENLTPLFPTVRMKMEAGNGSTEDLTGRVIDLCAPIGKGQRGLIVAPPKAGKTIMLQNIAANIARNNPEVHLIVLLIDERPEEVTEMQRTVRGEVVASTFDEPPTRHVQVAEMVIEKAKRLVEHKKDVVILLDSITRLARAYNTVIPSSGKVLTGGVDAHALEKPKRFFGAARNIEEGGSLTIIATALVETGSKMDEVIYEEFKGTGNMELPLDRRIAEKRVFPAININRSGTRREELLTADDELQRMWILRKLLHPMDEVAAIEFLIDKLKTTKTNDEFFLSMKRK.

Positions 48–123 (EISGDGVLEI…LKVDTINFDR (76 aa)) constitute a Rho RNA-BD domain. 3 RNA-binding regions span residues 61 to 66 (GFGFLR), 78 to 80 (DIY), and 108 to 110 (ERY). Residues 169 to 174 (GKGQRG), 181 to 186 (KAGKTI), and R212 contribute to the ATP site. The tract at residues 284-288 (VLTGG) is RNA-binding 2.

The protein belongs to the Rho family. As to quaternary structure, homohexamer. The homohexamer assembles into an open ring structure.

Functionally, facilitates transcription termination by a mechanism that involves Rho binding to the nascent RNA, activation of Rho's RNA-dependent ATPase activity, and release of the mRNA from the DNA template. The polypeptide is Transcription termination factor Rho (Pseudomonas fluorescens biotype C).